The sequence spans 431 residues: Glutamate-1-semialdehyde 2,1-aminomutase (431 aa).

Lysine 269 carries the N6-(pyridoxal phosphate)lysine modification.

The protein belongs to the class-III pyridoxal-phosphate-dependent aminotransferase family. HemL subfamily. As to quaternary structure, homodimer. It depends on pyridoxal 5'-phosphate as a cofactor.

The protein resides in the cytoplasm. The catalysed reaction is (S)-4-amino-5-oxopentanoate = 5-aminolevulinate. It functions in the pathway porphyrin-containing compound metabolism; protoporphyrin-IX biosynthesis; 5-aminolevulinate from L-glutamyl-tRNA(Glu): step 2/2. The sequence is that of Glutamate-1-semialdehyde 2,1-aminomutase from Francisella tularensis subsp. tularensis (strain WY96-3418).